The sequence spans 104 residues: L-rhamnose mutarotase (104 aa).

Tyr-18 provides a ligand contact to substrate. Residue His-22 is the Proton donor of the active site. Substrate contacts are provided by residues Tyr-41 and 76–77; that span reads WW.

The protein belongs to the rhamnose mutarotase family. Homodimer.

The protein localises to the cytoplasm. It carries out the reaction alpha-L-rhamnose = beta-L-rhamnose. It participates in carbohydrate metabolism; L-rhamnose metabolism. In terms of biological role, involved in the anomeric conversion of L-rhamnose. This chain is L-rhamnose mutarotase, found in Burkholderia cenocepacia (strain HI2424).